Consider the following 647-residue polypeptide: Chaperone protein DnaK (647 aa).

A Phosphothreonine; by autocatalysis modification is found at Thr199. The tract at residues 602–647 is disordered; sequence MYAQEQAQAGQQAGPGAGSASAGQSGEKPVEGEVVDAEFEEVKDKK. Residues 604 to 627 show a composition bias toward low complexity; it reads AQEQAQAGQQAGPGAGSASAGQSG.

This sequence belongs to the heat shock protein 70 family.

Acts as a chaperone. This Nitrosomonas eutropha (strain DSM 101675 / C91 / Nm57) protein is Chaperone protein DnaK.